Consider the following 261-residue polypeptide: MLIYSIVLMLVVTLIIASITLLERKLLSLVQRRVGPNFVGYKGRLQYLADALKLFLKGVAIPSGANSFFFVAMPSLAGAVCYTFWMNSIWGPSLSMFDVEYNIVYASLLSILFGLCVMLTGYFSKNKYSVMAGLRAAILMLNLEIFLGIVFLNVCFLVESFSFAAFAVYQEIFWLIFLFFFLLSNILLVFLLEVNRTPFDLAEAESELVTGYTTEYGGFYFALFYLGEYFHLFFFSCLISVVFFGSWELLKPFLFLHNYTV.

A run of 6 helical transmembrane segments spans residues 2–22 (LIYS…ITLL), 69–89 (FFVA…MNSI), 103–123 (IVYA…TGYF), 138–158 (ILML…CFLV), 172–192 (IFWL…VFLL), and 224–244 (FYLG…VVFF).

The protein belongs to the complex I subunit 1 family.

It is found in the mitochondrion inner membrane. It carries out the reaction a ubiquinone + NADH + 5 H(+)(in) = a ubiquinol + NAD(+) + 4 H(+)(out). Functionally, core subunit of the mitochondrial membrane respiratory chain NADH dehydrogenase (Complex I) that is believed to belong to the minimal assembly required for catalysis. Complex I functions in the transfer of electrons from NADH to the respiratory chain. The immediate electron acceptor for the enzyme is believed to be ubiquinone. The sequence is that of NADH-ubiquinone oxidoreductase chain 1 (ND1) from Paramecium tetraurelia.